The chain runs to 286 residues: Bark leucoagglutinin (286 aa).

An N-terminal signal peptide occupies residues 1 to 28 (ATSNSKPTQVLLATFLTFFFLLLNNVNS). Tyrosine 73 lines the N-acetyl-alpha-neuraminyl-(2-&gt;3)-beta-D-galactosyl-(1-&gt;4)-beta-D-glucose pocket. N-linked (GlcNAc...) asparagine glycosylation occurs at asparagine 89. 2 residues coordinate N-acetyl-alpha-neuraminyl-(2-&gt;3)-beta-D-galactosyl-(1-&gt;4)-beta-D-glucose: aspartate 115 and lysine 135. N-linked (GlcNAc...) asparagine glycosylation is present at asparagine 141. Residues glutamate 155 and aspartate 157 each coordinate Mn(2+). Residues aspartate 157, tyrosine 159, aspartate 165, and aspartate 168 each contribute to the Ca(2+) site. Residues tyrosine 159 and aspartate 165 each coordinate N-acetyl-alpha-neuraminyl-(2-&gt;3)-beta-D-galactosyl-(1-&gt;4)-beta-D-glucose. Mn(2+) contacts are provided by aspartate 168 and histidine 173. N-linked (GlcNAc...) asparagine glycans are attached at residues asparagine 207 and asparagine 219. The propeptide at 278–286 (NVHIARYTA) is removed in mature form.

Belongs to the leguminous lectin family.

Sialic acid-binding lectin specifically recognizing the trisaccharide sequence Neu5Ac/Gc-alpha-2,3-Gal-beta-1,4-GlcNAc/Glc. This Maackia amurensis (Amur maackia) protein is Bark leucoagglutinin.